A 468-amino-acid polypeptide reads, in one-letter code: Mothers against decapentaplegic homolog 1 (468 aa).

Met-1 is subject to N-acetylmethionine. Residues 12 to 136 (PAVKRLLGWK…YKRVESPVLP (125 aa)) form the MH1 domain. Residues Cys-64, Cys-109, Cys-121, and His-126 each contribute to the Zn(2+) site. The tract at residues 162–246 (NEPHMPLNAT…DGSQPMDTNM (85 aa)) is disordered. Positions 188 to 210 (PNSSYPNSPGSSSSTYPHSPTSS) are enriched in low complexity. A compositionally biased stretch (pro residues) spans 221 to 232 (DTPPPAYLPPED). Residues 237–246 (DGSQPMDTNM) are compositionally biased toward polar residues. The MH2 domain occupies 274–468 (WCSIVYYELN…SPHNPISSVS (195 aa)). A Phosphothreonine; by MINK1, TNIK and MAP4K4 modification is found at Thr-325. Positions 421–431 (KGWGAEYHRQD) are L3 loop. Residues Ser-466 and Ser-468 each carry the phosphoserine modification.

Belongs to the dwarfin/SMAD family. Found in a complex with SMAD4 and YY1. Interacts with HGS, NANOG and ZCCHC12. Upon C-terminus phosphorylation: forms trimers with another SMAD1 and the co-SMAD SMAD4. Interacts with PEBP2-alpha subunit, CREB-binding protein (CBP), p300, SMURF1, SMURF2, USP15 and HOXC8. Associates with ZNF423 or ZNF521 in response to BMP2 leading to activate transcription of BMP target genes. Interacts with SKOR1. Interacts (via MH2 domain) with LEMD3. Binding to LEMD3 results in at least a partial reduction of receptor-mediated phosphorylation. Forms a ternary complex with PSMB4 and OAZ1 before PSMB4 is incorporated into the 20S proteasome. Interacts (via MH2 domain) with FAM83G (via MH2 domain); in a SMAD4-independent manner. Interacts with ZC3H3. Interacts with TMEM119. Interacts (via MH1 and MH2 domains) with ZNF8. Interacts with RANBP3L; the interaction increases when SMAD1 is not phosphorylated and mediates SMAD1 nuclear export. Interacts with EGR1; this interaction inhibits SMAD1 dephosphorylation. Interacts with SMAD6. Interacts with YAP1. Interacts with MTMR4; negatively regulates BMP signaling through SMAD1 dephosphorylation and retention in endosomes. Post-translationally, phosphorylation of the C-terminal SVS motif by BMP type 1 receptor kinase activates SMAD1 by promoting dissociation from the receptor and trimerization with SMAD4. Phosphorylation by ERK2 MAP kinase in response to EGF or HGF prevents SMAD1 nuclear accumulation and transcriptional activity in response to BMP. Dephosphorylation, probably by PPM1A, induces its export from the nucleus to the cytoplasm. Dephosphorylation is inhibited by association with EGR1. Phosphorylation by CDK8/9 creates binding sites for YAP1, and subsequent phosphorylation by GSK3 switches off YAP1 binding and adds binding sites for SMURF1. In terms of processing, ubiquitinated by SMAD-specific E3 ubiquitin ligase SMURF1, leading to its degradation. Monoubiquitinated, leading to prevent DNA-binding. Deubiquitination by USP15 alleviates inhibition and promotes activation of TGF-beta target genes. Dephosphorylation, probably by PPM1A, induces its export from the nucleus to the cytoplasm. Phospho-SMAD1 is ubiquitinated by CHIP leading to disruption of the SMAD1-SMAD4 complex. Ubiquitous; present in liver, lung, stomach and spleen with lower level in heart, testes and skeletal muscle.

It is found in the cytoplasm. The protein resides in the nucleus. Functionally, transcriptional modulator that plays a role in various cellular processes, including embryonic development, cell differentiation, and tissue homeostasis. Upon BMP ligand binding to their receptors at the cell surface, is phosphorylated by activated type I BMP receptors (BMPRIs) and associates with SMAD4 to form an heteromeric complex which translocates into the nucleus acting as transcription factor. In turn, the hetero-trimeric complex recognizes cis-regulatory elements containing Smad Binding Elements (SBEs) to modulate the outcome of the signaling network. SMAD1/OAZ1/PSMB4 complex mediates the degradation of the CREBBP/EP300 repressor SNIP1. Positively regulates BMP4-induced expression of odontogenic development regulator MSX1 following IPO7-mediated nuclear import. The sequence is that of Mothers against decapentaplegic homolog 1 (Smad1) from Rattus norvegicus (Rat).